The sequence spans 319 residues: 4-diphosphocytidyl-2-C-methyl-D-erythritol kinase (319 aa).

Lys-21 is an active-site residue. Position 106–116 (106–116 (PIGAGLAGGSS)) interacts with ATP. Asp-148 is an active-site residue.

It belongs to the GHMP kinase family. IspE subfamily.

It carries out the reaction 4-CDP-2-C-methyl-D-erythritol + ATP = 4-CDP-2-C-methyl-D-erythritol 2-phosphate + ADP + H(+). Its pathway is isoprenoid biosynthesis; isopentenyl diphosphate biosynthesis via DXP pathway; isopentenyl diphosphate from 1-deoxy-D-xylulose 5-phosphate: step 3/6. In terms of biological role, catalyzes the phosphorylation of the position 2 hydroxy group of 4-diphosphocytidyl-2C-methyl-D-erythritol. The polypeptide is 4-diphosphocytidyl-2-C-methyl-D-erythritol kinase (Prochlorococcus marinus (strain SARG / CCMP1375 / SS120)).